Here is a 343-residue protein sequence, read N- to C-terminus: Dual oxidase maturation factor 1 (343 aa).

The Extracellular segment spans residues 1–24 (MATLGHTFPFYAGPKPTFPMDTTL). A helical transmembrane segment spans residues 25–45 (ASIIMIFLTALATFIVILPGI). Over 46–51 (RGKTRL) the chain is Cytoplasmic. The helical transmembrane segment at 52–72 (FWLLRVVTSLFIGAAILAVNF) threads the bilayer. Residues 73–183 (SSEWSVGQVS…RLAGHYTSAM (111 aa)) are Extracellular-facing. N-linked (GlcNAc...) asparagine glycans are attached at residues Asn-84, Asn-109, and Asn-121. A helical membrane pass occupies residues 184-204 (LWVAFLCWLLANVMLSMPVLV). Residues 205–206 (YG) are Cytoplasmic-facing. The helical transmembrane segment at 207–227 (GYMLLATGIFQLLALLFFSMA) threads the bilayer. The Extracellular portion of the chain corresponds to 228-249 (TSLTSPCPLHLGASVLHTHHGP). The helical transmembrane segment at 250 to 270 (AFWITLTTGLLCVLLGLAMAV) threads the bilayer. Topologically, residues 271–343 (AHRMQPHRLK…AHPKDPDCAL (73 aa)) are cytoplasmic. Residues 306–343 (RYRSMADSPKSQDIPLSEASSTKAYCKEAHPKDPDCAL) form a disordered region. The segment covering 330-343 (YCKEAHPKDPDCAL) has biased composition (basic and acidic residues).

The protein belongs to the DUOXA family. In terms of assembly, may interact with NUMB. In terms of tissue distribution, specifically expressed in thyroid gland. Also detected in esophagus.

It is found in the membrane. May be required for the maturation and the transport from the endoplasmic reticulum to the plasma membrane of functional DUOX1. The chain is Dual oxidase maturation factor 1 (DUOXA1) from Homo sapiens (Human).